We begin with the raw amino-acid sequence, 126 residues long: Fluoride-specific ion channel FluC (126 aa).

Transmembrane regions (helical) follow at residues 4-24 (PLLS…FLGL), 33-53 (IPLG…FAMA), 67-87 (FVIT…IEIV), and 97-117 (MAML…CLGL). 2 residues coordinate Na(+): Gly74 and Thr77.

The protein belongs to the fluoride channel Fluc/FEX (TC 1.A.43) family.

The protein localises to the cell inner membrane. The catalysed reaction is fluoride(in) = fluoride(out). Na(+) is not transported, but it plays an essential structural role and its presence is essential for fluoride channel function. Its function is as follows. Fluoride-specific ion channel. Important for reducing fluoride concentration in the cell, thus reducing its toxicity. In Acinetobacter baumannii (strain AB307-0294), this protein is Fluoride-specific ion channel FluC.